The chain runs to 251 residues: uncharacterized protein (251 aa).

This sequence belongs to the PaiB family.

This is an uncharacterized protein from Emericella nidulans (strain FGSC A4 / ATCC 38163 / CBS 112.46 / NRRL 194 / M139) (Aspergillus nidulans).